The following is a 144-amino-acid chain: UPF0306 protein ESA_03544 (144 aa).

The protein belongs to the UPF0306 family.

This Cronobacter sakazakii (strain ATCC BAA-894) (Enterobacter sakazakii) protein is UPF0306 protein ESA_03544.